A 520-amino-acid polypeptide reads, in one-letter code: Bifunctional dihydrofolate reductase-thymidylate synthase (520 aa).

A DHFR domain is found at 26-229 (AFSIVVALDM…LEFEICKYVP (204 aa)). Valine 30 serves as a coordination point for substrate. Residues alanine 32 and 38-44 (GIGDGES) contribute to the NADP(+) site. Aspartate 52 is a binding site for substrate. NADP(+) is bound by residues 81 to 83 (RKT), 102 to 105 (LSSK), and 157 to 164 (GGAQVYAD). Residues tyrosine 162 and threonine 180 each coordinate substrate. Positions 234–520 (ERQYLELIDR…HPAIKMEMAV (287 aa)) are thymidylate synthase. Arginine 254 is a dUMP binding site. Cysteine 400 is a catalytic residue. Residues histidine 401, 421-425 (QRSCD), asparagine 433, and 463-465 (HVY) each bind dUMP.

It in the N-terminal section; belongs to the dihydrofolate reductase family. In the C-terminal section; belongs to the thymidylate synthase family.

The catalysed reaction is (6S)-5,6,7,8-tetrahydrofolate + NADP(+) = 7,8-dihydrofolate + NADPH + H(+). It carries out the reaction dUMP + (6R)-5,10-methylene-5,6,7,8-tetrahydrofolate = 7,8-dihydrofolate + dTMP. The protein operates within cofactor biosynthesis; tetrahydrofolate biosynthesis; 5,6,7,8-tetrahydrofolate from 7,8-dihydrofolate: step 1/1. Functionally, bifunctional enzyme. Involved in de novo dTMP biosynthesis. Key enzyme in folate metabolism. Catalyzes an essential reaction for de novo glycine and purine synthesis, DNA precursor synthesis, and for the conversion of dUMP to dTMP. The chain is Bifunctional dihydrofolate reductase-thymidylate synthase from Leishmania major.